Reading from the N-terminus, the 434-residue chain is Histidinol dehydrogenase (434 aa).

NAD(+)-binding residues include Y130, Q192, and N215. 3 residues coordinate substrate: S238, Q260, and H263. Residues Q260 and H263 each coordinate Zn(2+). Residues E328 and H329 each act as proton acceptor in the active site. The substrate site is built by H329, D362, E416, and H421. Residue D362 coordinates Zn(2+). Zn(2+) is bound at residue H421.

Belongs to the histidinol dehydrogenase family. Zn(2+) serves as cofactor.

The enzyme catalyses L-histidinol + 2 NAD(+) + H2O = L-histidine + 2 NADH + 3 H(+). Its pathway is amino-acid biosynthesis; L-histidine biosynthesis; L-histidine from 5-phospho-alpha-D-ribose 1-diphosphate: step 9/9. Its function is as follows. Catalyzes the sequential NAD-dependent oxidations of L-histidinol to L-histidinaldehyde and then to L-histidine. The chain is Histidinol dehydrogenase from Synechococcus sp. (strain ATCC 27144 / PCC 6301 / SAUG 1402/1) (Anacystis nidulans).